The chain runs to 143 residues: Large-conductance mechanosensitive channel (143 aa).

A run of 2 helical transmembrane segments spans residues 10–30 (FAVKGNVMDLAVGVIIGGAFS) and 89–109 (GSFITVAINFVILAFIIFLMV).

The protein belongs to the MscL family. In terms of assembly, homopentamer.

It localises to the cell inner membrane. Its function is as follows. Channel that opens in response to stretch forces in the membrane lipid bilayer. May participate in the regulation of osmotic pressure changes within the cell. The protein is Large-conductance mechanosensitive channel of Burkholderia cenocepacia (strain HI2424).